Reading from the N-terminus, the 88-residue chain is Transmembrane protein 069R (88 aa).

2 consecutive transmembrane segments (helical) span residues 30–50 and 67–87; these read ALWP…VFTA and VGVF…GDSF.

It is found in the host membrane. In Frog virus 3 (isolate Goorha) (FV-3), this protein is Transmembrane protein 069R.